A 215-amino-acid polypeptide reads, in one-letter code: Elongation factor Ts (215 aa).

The involved in Mg(2+) ion dislocation from EF-Tu stretch occupies residues T80–A83.

This sequence belongs to the EF-Ts family.

Its subcellular location is the cytoplasm. Associates with the EF-Tu.GDP complex and induces the exchange of GDP to GTP. It remains bound to the aminoacyl-tRNA.EF-Tu.GTP complex up to the GTP hydrolysis stage on the ribosome. This is Elongation factor Ts from Acetivibrio thermocellus (strain ATCC 27405 / DSM 1237 / JCM 9322 / NBRC 103400 / NCIMB 10682 / NRRL B-4536 / VPI 7372) (Clostridium thermocellum).